The following is a 268-amino-acid chain: Endonuclease 8 1 (268 aa).

Proline 2 serves as the catalytic Schiff-base intermediate with DNA. Glutamate 3 serves as the catalytic Proton donor. The active-site Proton donor; for beta-elimination activity is the lysine 52. Residues arginine 125 and asparagine 166 each coordinate DNA. The FPG-type zinc finger occupies 234–268; it reads YVYRRAGEPCRVCGGVIRTALLEGRNVFWCPVCQT. Arginine 258 functions as the Proton donor; for delta-elimination activity in the catalytic mechanism.

Belongs to the FPG family. Zn(2+) is required as a cofactor.

The enzyme catalyses 2'-deoxyribonucleotide-(2'-deoxyribose 5'-phosphate)-2'-deoxyribonucleotide-DNA = a 3'-end 2'-deoxyribonucleotide-(2,3-dehydro-2,3-deoxyribose 5'-phosphate)-DNA + a 5'-end 5'-phospho-2'-deoxyribonucleoside-DNA + H(+). Its function is as follows. Involved in base excision repair of DNA damaged by oxidation or by mutagenic agents. Acts as a DNA glycosylase that recognizes and removes damaged bases. Has AP (apurinic/apyrimidinic) lyase activity and introduces nicks in the DNA strand. Cleaves the DNA backbone by beta-delta elimination to generate a single-strand break at the site of the removed base with both 3'- and 5'-phosphates. This is Endonuclease 8 1 (nei1) from Mycobacterium bovis (strain ATCC BAA-935 / AF2122/97).